A 243-amino-acid polypeptide reads, in one-letter code: Probable transcriptional regulatory protein LCABL_11860 (243 aa).

Positions 1–23 (MSGHSKWHNIQGRKNAQDSKRGK) are disordered.

It belongs to the TACO1 family.

The protein localises to the cytoplasm. This is Probable transcriptional regulatory protein LCABL_11860 from Lacticaseibacillus casei (strain BL23) (Lactobacillus casei).